The sequence spans 426 residues: Torsin-4A (426 aa).

Residues 41 to 60 (QPGTEPDSGTGTLGPTGSLG) are disordered. A compositionally biased stretch (low complexity) spans 48-60 (SGTGTLGPTGSLG). Ser-58 and Ser-76 each carry phosphoserine. Phosphothreonine is present on Thr-84. Ser-101 carries the phosphoserine modification. The helical transmembrane segment at 117–133 (CLLLLVAIVGFQVLNAI) threads the bilayer. 189 to 196 (GPSGVGKS) is an ATP binding site.

Belongs to the ClpA/ClpB family. Torsin subfamily.

The protein localises to the membrane. The polypeptide is Torsin-4A (Tor4a) (Mus musculus (Mouse)).